Reading from the N-terminus, the 106-residue chain is L-rhamnose mutarotase (106 aa).

A substrate-binding site is contributed by Y20. H24 functions as the Proton donor in the catalytic mechanism. Residues Y43 and 78–79 (WW) contribute to the substrate site.

The protein belongs to the rhamnose mutarotase family. Homodimer.

It is found in the cytoplasm. The catalysed reaction is alpha-L-rhamnose = beta-L-rhamnose. The protein operates within carbohydrate metabolism; L-rhamnose metabolism. Its function is as follows. Involved in the anomeric conversion of L-rhamnose. The polypeptide is L-rhamnose mutarotase (Verminephrobacter eiseniae (strain EF01-2)).